Here is a 428-residue protein sequence, read N- to C-terminus: Enolase (428 aa).

Glutamine 163 provides a ligand contact to (2R)-2-phosphoglycerate. Glutamate 205 acts as the Proton donor in catalysis. Mg(2+)-binding residues include aspartate 242, glutamate 286, and aspartate 313. The (2R)-2-phosphoglycerate site is built by lysine 338, arginine 367, serine 368, and lysine 389. Residue lysine 338 is the Proton acceptor of the active site.

This sequence belongs to the enolase family. It depends on Mg(2+) as a cofactor.

It localises to the cytoplasm. The protein localises to the secreted. It is found in the cell surface. The catalysed reaction is (2R)-2-phosphoglycerate = phosphoenolpyruvate + H2O. It functions in the pathway carbohydrate degradation; glycolysis; pyruvate from D-glyceraldehyde 3-phosphate: step 4/5. Functionally, catalyzes the reversible conversion of 2-phosphoglycerate (2-PG) into phosphoenolpyruvate (PEP). It is essential for the degradation of carbohydrates via glycolysis. This Syntrophus aciditrophicus (strain SB) protein is Enolase.